The primary structure comprises 58 residues: Large ribosomal subunit protein uL30 (58 aa).

This sequence belongs to the universal ribosomal protein uL30 family. Part of the 50S ribosomal subunit.

In Pseudomonas aeruginosa (strain LESB58), this protein is Large ribosomal subunit protein uL30.